A 169-amino-acid polypeptide reads, in one-letter code: Putative hydrolase 111R (169 aa).

Positions 46-169 (FEKRKAGVFV…QKILMALSCN (124 aa)) constitute a Nudix hydrolase domain. Positions 76-98 (GHMEAYDHSPKTCAERELKEETG) match the Nudix box motif. Mg(2+) is bound by residues Glu-92, Glu-96, and Asp-138.

This sequence belongs to the Nudix hydrolase family. Mg(2+) is required as a cofactor. The cofactor is Mn(2+).

The sequence is that of Putative hydrolase 111R from Aedes vexans (Inland floodwater mosquito).